We begin with the raw amino-acid sequence, 2541 residues long: Talin-1 (2541 aa).

One can recognise an FERM domain in the interval 86–403; it reads RPLKIRMLDG…GYIDIILKKK (318 aa). Residue threonine 167 is modified to Phosphothreonine. The segment at 280 to 435 is interaction with LAYN; that stretch reads FQAHKNCGQM…PKKSTVLQQQ (156 aa). Residues serine 405, serine 425, serine 446, serine 620, and serine 729 each carry the phosphoserine modification. Positions 482–655 are helical bundle R1; it reads RGHMPPLTSA…QASGELLQQI (174 aa). A helical bundle R2 region spans residues 656–786; that stretch reads GESDTDPHFQ…ALNELLQHVK (131 aa). Positions 787 to 911 are helical bundle R3; it reads AHATGAGPAG…NAAAQNAIKK (125 aa). Positions 913–1044 are helical bundle R4; that stretch reads LVQRLEHAAK…RTAAQKAQEA (132 aa). Phosphoserine is present on serine 1021. The interval 1046–1206 is helical bundle R5; that stretch reads GPLEMDSALS…NRCVSCLPGQ (161 aa). Position 1116 is a phosphotyrosine (tyrosine 1116). Threonine 1142 carries the post-translational modification Phosphothreonine. A phosphoserine mark is found at serine 1201 and serine 1225. The helical bundle R6 stretch occupies residues 1207 to 1357; that stretch reads RDVDNALRAV…QLITMCTQQA (151 aa). Threonine 1263 is modified (phosphothreonine). Phosphoserine is present on serine 1323. An interaction with SYNM region spans residues 1327–1948; that stretch reads AAPNLKSQLA…CSPSDAYTKK (622 aa). The segment at 1358–1453 is helical bundle R7A; it reads PGQKECDNAL…AYLVGVSDPN (96 aa). The tract at residues 1359 to 1659 is interaction with VCL and F-actin; sequence GQKECDNALR…SMRDKAPGQL (301 aa). Positions 1461-1580 are helical bundle R8; sequence LVEPTQFARA…NLSAFASNPE (120 aa). Lysine 1544 bears the N6-acetyllysine mark. The interval 1581–1653 is helical bundle R7B; the sequence is FSSIPAQISP…IKKLITSMRD (73 aa). The segment at 1655-1822 is helical bundle R9; sequence APGQLECETA…TLNEAASAAG (168 aa). The tract at residues 1823 to 1973 is helical bundle R10; the sequence is VVGGMVDSIT…VLAALQAGNR (151 aa). Serine 1849 carries the post-translational modification Phosphoserine. Threonine 1855 carries the phosphothreonine modification. Serine 1878 bears the Phosphoserine mark. The segment at 1974–2140 is helical bundle R11; the sequence is GTQACITAAS…TVKAVEDEAT (167 aa). Lysine 2031 is subject to N6-acetyllysine. Phosphoserine is present on serine 2040. Lysine 2115 carries the post-translational modification N6-acetyllysine. A helical bundle R12 region spans residues 2141–2294; that stretch reads KGTRALEATT…QAAEAMKGTE (154 aa). In terms of domain architecture, I/LWEQ spans 2293-2533; that stretch reads TEWVDPEDPT…QIRQQQYKFL (241 aa). Residues 2300–2482 are helical bundle R13; that stretch reads DPTVIAENEL…AAQKAAAFEE (183 aa).

Part of a complex composed of THSD1, PTK2/FAK1, TLN1 and VCL. Interacts with THSD1; this promotes interaction with PTK2/FAK1 and VCL. Binds with high affinity to VCL and with low affinity to integrins. Interacts with APBB1IP; this inhibits VCL binding. Interacts with PTK2/FAK1. Interacts with PIP5K1C and NRAP. Interacts with LAYN. Interacts with SYNM. Interacts with ITGB1; the interaction is prevented by competitive binding of ITGB1BP1. Interacts with SVEP1. Interacts (via R7 domain) with KANK1 or KANK2 (via KN motif); this interaction likely initiates the assembly of cortical microtubule stabilization complexes (CMSCs) at the vicinity of focal adhesions. In terms of assembly, interacts with VCL; shows reduced VCL binding compared to isoform 2. Interacts with APBB1IP; shows similar level of binding compared to isoform 2. As to quaternary structure, interacts with VCL; shows enhanced VCL binding compared to isoform 1. Interacts with APBB1IP; shows similar level of binding compared to isoform 1. (Microbial infection) Interacts with human cytomegalovirus protein UL135. In terms of tissue distribution, expressed at low to non-detectable levels in many tissues but highly expressed in skin and pancreas with other tissues including kidney cortex, endocervix, testis, pituitary, liver, and spleen also showing robust expression.

Its subcellular location is the cell projection. It localises to the ruffle membrane. The protein localises to the cytoplasm. It is found in the cytoskeleton. The protein resides in the cell surface. Its subcellular location is the cell junction. It localises to the focal adhesion. Functionally, high molecular weight cytoskeletal protein concentrated at regions of cell-matrix and cell-cell contacts. Involved in connections of major cytoskeletal structures to the plasma membrane. With KANK1 co-organize the assembly of cortical microtubule stabilizing complexes (CMSCs) positioned to control microtubule-actin crosstalk at focal adhesions (FAs) rims. This is Talin-1 (TLN1) from Homo sapiens (Human).